A 298-amino-acid chain; its full sequence is MSAHLIDGKAIAAEIDARAGEVGAKLASSLGRPPCLAVVLVGEDPASDVYVRNKVRRTEAAGLTSIEIRKSAEATEAEIIAIVERLNADDGVDGILVQMPLPGHIDTNRVIGRIDPDKDVDGLTEVSAGRLVLGKPGLRPCTPAGCVLLAERALGDLSGKSVVVIGRSILVGKPAALLFLEKNATVTIAHSRTADLPSLCRTADILVPAVGRPEMVRGDWVKPGACVLDVGINRIDAPERGAGKTRLVGDAAFDEIVGHAGWITPVPGGIGPMTIAMLLKNTVIAAALRAKQPALADF.

Residues 166 to 168 (GRS), Ser191, and Ile232 each bind NADP(+).

The protein belongs to the tetrahydrofolate dehydrogenase/cyclohydrolase family. Homodimer.

The catalysed reaction is (6R)-5,10-methylene-5,6,7,8-tetrahydrofolate + NADP(+) = (6R)-5,10-methenyltetrahydrofolate + NADPH. It carries out the reaction (6R)-5,10-methenyltetrahydrofolate + H2O = (6R)-10-formyltetrahydrofolate + H(+). It functions in the pathway one-carbon metabolism; tetrahydrofolate interconversion. Catalyzes the oxidation of 5,10-methylenetetrahydrofolate to 5,10-methenyltetrahydrofolate and then the hydrolysis of 5,10-methenyltetrahydrofolate to 10-formyltetrahydrofolate. This chain is Bifunctional protein FolD, found in Maricaulis maris (strain MCS10) (Caulobacter maris).